Reading from the N-terminus, the 1288-residue chain is Outer capsid protein lambda-2 (1288 aa).

G892–S899 serves as a coordination point for ATP.

This sequence belongs to the orthoreovirus lambda-2 protein family. As to quaternary structure, interacts with protein mu-NS; in viral inclusions.

The protein localises to the virion. It carries out the reaction a 5'-end diphospho-ribonucleoside in mRNA + GTP + H(+) = a 5'-end (5'-triphosphoguanosine)-ribonucleoside in mRNA + diphosphate. It catalyses the reaction a 5'-end (5'-triphosphoguanosine)-ribonucleoside in mRNA + S-adenosyl-L-methionine = a 5'-end (N(7)-methyl 5'-triphosphoguanosine)-ribonucleoside in mRNA + S-adenosyl-L-homocysteine. Its function is as follows. Outer capsid protein involved in mRNA capping. Catalyzes the last 3 enzymatic activities for formation of the 5' cap structure on the viral plus-strand transcripts, namely the RNA guanylyltransferase, RNA-7N- and RNA-2'O-methyltransferase activities. In Reovirus type 2 (strain D5/Jones) (T2J), this protein is Outer capsid protein lambda-2 (L2).